A 291-amino-acid polypeptide reads, in one-letter code: ATP synthase gamma chain (291 aa).

This sequence belongs to the ATPase gamma chain family. In terms of assembly, F-type ATPases have 2 components, CF(1) - the catalytic core - and CF(0) - the membrane proton channel. CF(1) has five subunits: alpha(3), beta(3), gamma(1), delta(1), epsilon(1). CF(0) has three main subunits: a, b and c.

Its subcellular location is the cell inner membrane. Produces ATP from ADP in the presence of a proton gradient across the membrane. The gamma chain is believed to be important in regulating ATPase activity and the flow of protons through the CF(0) complex. In Neisseria meningitidis serogroup C / serotype 2a (strain ATCC 700532 / DSM 15464 / FAM18), this protein is ATP synthase gamma chain.